The following is a 2098-amino-acid chain: Unconventional myosin heavy chain 6 (2098 aa).

Positions 62 to 732 (QGVEDMCQLG…HDLVLEQEYY (671 aa)) constitute a Myosin motor domain. 155–162 (GESGAGKT) provides a ligand contact to ATP. Actin-binding regions lie at residues 609–631 (LEQL…KPNE) and 711–725 (QLGK…KHDL). IQ domains are found at residues 735 to 757 (LKDK…DFEK), 758 to 787 (QRQA…GFSR), and 804 to 833 (LRKT…RGEK). The tract at residues 860 to 898 (FLPSDGKDSGNENDSADSSRRGSYSRLHTSPVMPPANIP) is disordered. The MyTH4 1 domain occupies 929-1168 (HVKKPLKTAL…PSYVELQANK (240 aa)). The 41-residue stretch at 1171-1211 (KPVVLAVTFMDGSVKTLCADSATTAAELCKQLAEKVGLTNS) folds into the Ras-associating domain. The FERM 1 domain maps to 1173–1481 (VVLAVTFMDG…MFLEGLKKRS (309 aa)). Positions 1479 to 1547 (KRSRYLVAIK…RAENVYVLPT (69 aa)) constitute an SH3 domain. The region spanning 1624–1772 (FSREHIDQPL…PHLVEVEAIQ (149 aa)) is the MyTH4 2 domain. The FERM 2 domain maps to 1778–2086 (IFHKVFFPDN…SYISLLISNQ (309 aa)).

Belongs to the TRAFAC class myosin-kinesin ATPase superfamily. Myosin family. As to quaternary structure, interacts with unc-98.

The protein localises to the cytoplasm. In terms of biological role, myosins are actin-based motor molecules with ATPase activity. Unconventional myosins serve in intracellular movements. Their highly divergent tails are presumed to bind to membranous compartments, which would be moved relative to actin filaments. This is Unconventional myosin heavy chain 6 from Caenorhabditis elegans.